The sequence spans 118 residues: UPF0342 protein BT9727_0768 (118 aa).

It belongs to the UPF0342 family.

This Bacillus thuringiensis subsp. konkukian (strain 97-27) protein is UPF0342 protein BT9727_0768.